An 851-amino-acid polypeptide reads, in one-letter code: MAKTNISPGMQQYLDIKKNYPDAFLLFRMGDFYELFYEDAVKAAQLLEIGLTSRNKNAENPIPMAGVPHHSAQQYIDVLIELGYKVAVAEQMEDPKQAVGVVKREVVQVITPGTVVDSAKPDSANNFLVAVDFDGCRYGLAYMDVSTGEFCVTDLADFTSVRSEIQNLKAKEVLLGFDLSEEEQTILVKQMNLLLSYEETVYEDKSLIDGQLTTVELTAAGKLLQYVHKTQMRELSHLQALVHYEIKDYLQMSYATKSSLDLVENARTNKKHGSLYWLLDETKTAMGMRLLRSWIDRPLVSKEAILERQEIIQVFLNAFIERTDLSNSLKGVYDIERLSSRVSFGKANPKDLLQLGHTLAQVPYIKAILESFDSPCVDKLVNDIDSLPELEYLIRTAIDPDAPATISEGSIIRNGFDERLDHYRKVMREGTGWIADIEAKERQESGINNLKIDYNKKDGYYFHVTNSNLSLVPEHFFRKATLKNSERYGTAELAKIEGQMLEAREESSSLEYDIFMCIRAQVETYINRLQKLAKTLATVDVLQSLAVVAETNHYIRPQFNDNHVITIQEGRHAVVEKVMGVQEYIPNSISFDQQTSIQLITGPNMSGKSTYMRQLALTVIMAQMGSFVAADHVDLPLFDAIFTRIGAADDLISGQSTFMVEMMEANQAIKRASDNSLILFDELGRGTATYDGMALAQAIIEYIHDRVGAKTIFATHYHELTDLSTKLTSLVNVHVATLEKDGDVTFLHKIAEGPADKSYGIHVAKIAGLPKSLLKRADEVLTRLETQSRSTEIMSVPPQVESSSAVRQGQLSLFGDDEKAHEIRQALEAIDVMNMTPFQAMTTLYELKKLL.

602–609 (GPNMSGKS) is a binding site for ATP.

The protein belongs to the DNA mismatch repair MutS family.

In terms of biological role, this protein is involved in the repair of mismatches in DNA. It is possible that it carries out the mismatch recognition step. This protein has a weak ATPase activity. The polypeptide is DNA mismatch repair protein MutS (Streptococcus pyogenes serotype M2 (strain MGAS10270)).